Reading from the N-terminus, the 347-residue chain is S-adenosylmethionine decarboxylase proenzyme (347 aa).

Active-site residues include Glu-10 and Glu-13. Ser-66 functions as the Schiff-base intermediate with substrate; via pyruvic acid in the catalytic mechanism. At Ser-66 the chain carries Pyruvic acid (Ser); by autocatalysis. Cys-80 functions as the Proton donor; for catalytic activity in the catalytic mechanism. Residues Ser-237 and His-251 each act as proton acceptor; for processing activity in the active site.

This sequence belongs to the eukaryotic AdoMetDC family. The cofactor is pyruvate. Post-translationally, is synthesized initially as an inactive proenzyme. Formation of the active enzyme involves a self-maturation process in which the active site pyruvoyl group is generated from an internal serine residue via an autocatalytic post-translational modification. Two non-identical subunits are generated from the proenzyme in this reaction, and the pyruvate is formed at the N-terminus of the alpha chain, which is derived from the carboxyl end of the proenzyme. The post-translation cleavage follows an unusual pathway, termed non-hydrolytic serinolysis, in which the side chain hydroxyl group of the serine supplies its oxygen atom to form the C-terminus of the beta chain, while the remainder of the serine residue undergoes an oxidative deamination to produce ammonia and the pyruvoyl group blocking the N-terminus of the alpha chain.

It carries out the reaction S-adenosyl-L-methionine + H(+) = S-adenosyl 3-(methylsulfanyl)propylamine + CO2. It participates in amine and polyamine biosynthesis; S-adenosylmethioninamine biosynthesis; S-adenosylmethioninamine from S-adenosyl-L-methionine: step 1/1. This is S-adenosylmethionine decarboxylase proenzyme (SamDC) from Drosophila melanogaster (Fruit fly).